Reading from the N-terminus, the 727-residue chain is Catalase-peroxidase (727 aa).

Residues 95–218 (WHSAGTYRII…LAAVQMGLIY (124 aa)) constitute a cross-link (tryptophyl-tyrosyl-methioninium (Trp-Tyr) (with M-244)). His-96 acts as the Proton acceptor in catalysis. Residues 218 to 244 (YVNPEGPNGEPDVLGAAKDIKESFGKM) constitute a cross-link (tryptophyl-tyrosyl-methioninium (Tyr-Met) (with W-95)). His-259 serves as a coordination point for heme b.

Belongs to the peroxidase family. Peroxidase/catalase subfamily. Homodimer or homotetramer. The cofactor is heme b. Formation of the three residue Trp-Tyr-Met cross-link is important for the catalase, but not the peroxidase activity of the enzyme.

The enzyme catalyses H2O2 + AH2 = A + 2 H2O. It catalyses the reaction 2 H2O2 = O2 + 2 H2O. In terms of biological role, bifunctional enzyme with both catalase and broad-spectrum peroxidase activity. The protein is Catalase-peroxidase of Persephonella marina (strain DSM 14350 / EX-H1).